A 376-amino-acid polypeptide reads, in one-letter code: Lipid-A-disaccharide synthase (376 aa).

Belongs to the LpxB family.

The catalysed reaction is a lipid X + a UDP-2-N,3-O-bis[(3R)-3-hydroxyacyl]-alpha-D-glucosamine = a lipid A disaccharide + UDP + H(+). It participates in bacterial outer membrane biogenesis; LPS lipid A biosynthesis. Condensation of UDP-2,3-diacylglucosamine and 2,3-diacylglucosamine-1-phosphate to form lipid A disaccharide, a precursor of lipid A, a phosphorylated glycolipid that anchors the lipopolysaccharide to the outer membrane of the cell. This Coxiella burnetii (strain CbuG_Q212) (Coxiella burnetii (strain Q212)) protein is Lipid-A-disaccharide synthase.